The primary structure comprises 572 residues: Moesin (572 aa).

The region spanning 1–294 (MPRGVAVRVT…GNHELYMRRR (294 aa)) is the FERM domain. 2 disordered regions span residues 444 to 508 (SQER…SYLP) and 523 to 544 (LQAMKDESKGEDRYDKIHQENI). Low complexity predominate over residues 454–475 (AQEAAAAQHAAQLAAQREAQQL). Over residues 480–502 (EGEEDEQDHELEVQQDDNDDLDD) the composition is skewed to acidic residues. The segment covering 525 to 544 (AMKDESKGEDRYDKIHQENI) has biased composition (basic and acidic residues).

It is found in the cell membrane. The protein resides in the cytoplasm. It localises to the cytoskeleton. Its subcellular location is the cell projection. Its function is as follows. Probably involved in connections of major cytoskeletal structures to the plasma membrane. The chain is Moesin from Lytechinus variegatus (Green sea urchin).